The sequence spans 585 residues: Amyloid protein-binding protein 2 (585 aa).

8 TPR repeats span residues 50-83 (QGRL…HHCF), 120-153 (IQVG…CTLH), 206-239 (AALY…ITAG), 288-321 (SDTL…RQSV), 333-367 (HEDL…ITHI), 429-462 (AKHY…KEQL), 471-505 (ALSV…GKKL), and 514-547 (EYDY…NRLR).

As to quaternary structure, component of a CRL2 E3 ubiquitin-protein ligase complex, also named ECS (Elongin BC-CUL2/5-SOCS-box protein) complex, composed of CUL2, Elongin BC (ELOB and ELOC), RBX1 and substrate-specific adapter APPBP2. Interacts with APP; APP interaction inhibits the E3 ubiquitin-protein ligase activity of the CRL2(APPBP2) complex. Post-translationally, rapidly degraded by the proteasome upon overexpression of a C-terminal fragment of APP.

It is found in the nucleus. The protein resides in the cytoplasm. The protein localises to the cytoskeleton. Its subcellular location is the membrane. The protein operates within protein modification; protein ubiquitination. With respect to regulation, E3 ubiquitin-protein ligase activity of the CRL2(APPBP2) complex is inhibited by APP. Functionally, substrate-recognition component of a Cul2-RING (CRL2) E3 ubiquitin-protein ligase complex of the DesCEND (destruction via C-end degrons) pathway, which recognizes a C-degron located at the extreme C terminus of target proteins, leading to their ubiquitination and degradation. The C-degron recognized by the DesCEND pathway is usually a motif of less than ten residues and can be present in full-length proteins, truncated proteins or proteolytically cleaved forms. The CRL2(APPBP2) complex specifically recognizes proteins with a -Arg-Xaa-Xaa-Gly degron at the C-terminus, leading to their ubiquitination and degradation. The CRL2(APPBP2) complex mediates ubiquitination and degradation of truncated SELENOV selenoproteins produced by failed UGA/Sec decoding, which end with a -Arg-Xaa-Xaa-Gly degron. May play a role in intracellular protein transport: may be involved in the translocation of APP along microtubules toward the cell surface. This chain is Amyloid protein-binding protein 2, found in Homo sapiens (Human).